A 79-amino-acid chain; its full sequence is UPF0180 protein BCB4264_A1446 (79 aa).

This sequence belongs to the UPF0180 family.

The protein is UPF0180 protein BCB4264_A1446 of Bacillus cereus (strain B4264).